The sequence spans 2038 residues: HEAT repeat-containing protein 5A (2038 aa).

HEAT repeat units follow at residues 850–887 and 1082–1119; these read EVRR…VADD and LLRR…AAAD. Residues 1646–1668 are disordered; that stretch reads RSAEVDDGASEKETLPEFGEGKD. Ser-1647 is modified (phosphoserine).

This sequence belongs to the HEATR5 family.

This Mus musculus (Mouse) protein is HEAT repeat-containing protein 5A (Heatr5a).